Reading from the N-terminus, the 860-residue chain is SH2 domain-containing protein 3C (860 aa).

Position 22 is a phosphoserine (Ser-22). Disordered stretches follow at residues 51 to 117 (EATQ…PPGL) and 130 to 180 (PLED…PEAG). A compositionally biased stretch (basic and acidic residues) spans 162-175 (ERPPRDVHSERAAG). An SH2 domain is found at 220-319 (WYHGRIPREV…QSGAIIYCPV (100 aa)). 2 positions are modified to phosphotyrosine: Tyr-278 and Tyr-283. Positions 335–537 (GQGSSKPASP…LSENGAPEGD (203 aa)) are disordered. Ser-359 is subject to Phosphoserine. Low complexity-rich tracts occupy residues 405-420 (SPMSPISESPSSPAYS), 427-443 (AAPAAPSATALPASPVA), and 479-490 (SPSPSLSSYSDP). Ser-440 carries the post-translational modification Phosphoserine. The Ras-GEF domain maps to 586–854 (DARTLARHVT…TALSHKLEPA (269 aa)). Residue Tyr-793 is modified to Phosphotyrosine.

In terms of assembly, component of a complex comprised of SH2D3C, BCAR1/CAS, and CRK. Within the complex, interacts with CRK and (via C-terminus) with BCAR1/CAS (via C-terminus). Interacts with NEDD9/HEF1. Interacts with EPHB2. Interacts with NEDD9/HEF1. Interacts with BCAR1/CAS. Interacts with PTK2B. As to quaternary structure, interacts (via C-terminus) with BCAR1/CAS (via C-terminus). Interacts with IGF1. Post-translationally, phosphorylated by MAPK/ERK upon T-cell receptor stimulation in T-cells. In terms of tissue distribution, ubiquitously expressed.

It localises to the cytoplasm. The protein resides in the cell membrane. Its subcellular location is the cell projection. It is found in the axon. The protein localises to the ruffle membrane. Acts as an adapter protein that mediates cell signaling pathways involved in cellular functions such as cell adhesion and migration, tissue organization, and the regulation of the immune response. Plays a role in integrin-mediated cell adhesion through BCAR1-CRK-RAPGEF1 signaling and activation of the small GTPase RAP1. Promotes cell migration and invasion through the extracellular matrix. Required for marginal zone B-cell development and thymus-independent type 2 immune responses. Mediates migration and adhesion of B cells in the splenic marginal zone via promoting hyperphosphorylation of NEDD9/CASL. Plays a role in CXCL13-induced chemotaxis of B-cells. Plays a role in the migration of olfactory sensory neurons (OSNs) into the forebrain and the innervation of the olfactory bulb by the OSN axons during development. Required for the efficient tyrosine phosphorylation of BCAR1 in OSN axons. Its function is as follows. Important regulator of chemokine-induced, integrin-mediated T lymphocyte adhesion and migration, acting upstream of RAP1. Required for tissue-specific adhesion of T lymphocytes to peripheral tissues. Required for basal and CXCL2 stimulated serine-threonine phosphorylation of NEDD9. May be involved in the regulation of T-cell receptor-mediated IL2 production through the activation of the JNK pathway in T-cells. Functionally, may be involved in the BCAR1/CAS-mediated JNK activation pathway. In Homo sapiens (Human), this protein is SH2 domain-containing protein 3C (SH2D3C).